A 395-amino-acid chain; its full sequence is MKSWCKNLLAAGLSLAMLSACSSSDVEEEPVSELTAIQATVFPEVSWSASVGDGVGDYYSRLTPAVRYGKIFAADRYGAVMAFDEASGEQVWRKDFSEEFRDNALAKNKGARLAAGITAARNKLFIGGESGLLAALNAEDGQVLWHVIAGGELLSKPTVADDVVVVSTSSGSLEAYNVDTGAKLWVYDMQLPNLTLRGTGSAAYEAGGFFIGTADGKVAVVVKNNGQAAWEQAIYNPTGGNEFTRMADVDMTPLILGDNLYAVSYNGNLVSMELRTGRIIWTRKYSSFNELTTAGLSLFLVDDHSRIYSVDRRNGLELWSNSELVNRTLTSPEVYKDYLVVGDFEGYLHFIDRSTGSIVGRIQVDSSGLFSQPIVVDDKIYVQGRSGKLAVVTLP.

The N-terminal stretch at 1–20 (MKSWCKNLLAAGLSLAMLSA) is a signal peptide. Cysteine 21 carries N-palmitoyl cysteine lipidation. A lipid anchor (S-diacylglycerol cysteine) is attached at cysteine 21.

Belongs to the BamB family. In terms of assembly, part of the Bam complex.

It localises to the cell outer membrane. Functionally, part of the outer membrane protein assembly complex, which is involved in assembly and insertion of beta-barrel proteins into the outer membrane. The protein is Outer membrane protein assembly factor BamB of Shewanella oneidensis (strain ATCC 700550 / JCM 31522 / CIP 106686 / LMG 19005 / NCIMB 14063 / MR-1).